The primary structure comprises 126 residues: Holo-[acyl-carrier-protein] synthase (126 aa).

Residues aspartate 9 and glutamate 58 each coordinate Mg(2+).

This sequence belongs to the P-Pant transferase superfamily. AcpS family. Mg(2+) is required as a cofactor.

The protein localises to the cytoplasm. It carries out the reaction apo-[ACP] + CoA = holo-[ACP] + adenosine 3',5'-bisphosphate + H(+). Transfers the 4'-phosphopantetheine moiety from coenzyme A to a Ser of acyl-carrier-protein. The chain is Holo-[acyl-carrier-protein] synthase from Pectobacterium atrosepticum (strain SCRI 1043 / ATCC BAA-672) (Erwinia carotovora subsp. atroseptica).